A 481-amino-acid polypeptide reads, in one-letter code: ATP synthase subunit beta (481 aa).

Residue 160–167 (GGAGVGKT) participates in ATP binding.

This sequence belongs to the ATPase alpha/beta chains family. As to quaternary structure, F-type ATPases have 2 components, CF(1) - the catalytic core - and CF(0) - the membrane proton channel. CF(1) has five subunits: alpha(3), beta(3), gamma(1), delta(1), epsilon(1). CF(0) has three main subunits: a(1), b(2) and c(9-12). The alpha and beta chains form an alternating ring which encloses part of the gamma chain. CF(1) is attached to CF(0) by a central stalk formed by the gamma and epsilon chains, while a peripheral stalk is formed by the delta and b chains.

Its subcellular location is the cell inner membrane. It catalyses the reaction ATP + H2O + 4 H(+)(in) = ADP + phosphate + 5 H(+)(out). Functionally, produces ATP from ADP in the presence of a proton gradient across the membrane. The catalytic sites are hosted primarily by the beta subunits. This chain is ATP synthase subunit beta, found in Stigmatella aurantiaca.